The following is a 174-amino-acid chain: Secreted protein A (174 aa).

Residues methionine 1–alanine 19 form the signal peptide. Asparagine 156 is a glycosylation site (N-linked (GlcNAc...) asparagine).

This sequence belongs to the Sct family. In terms of processing, probably contains disulfide bonds.

It is found in the secreted. The protein localises to the extracellular vesicle. This Dictyostelium discoideum (Social amoeba) protein is Secreted protein A (p17).